The primary structure comprises 114 residues: Ig kappa chain V region AH80-5 (114 aa).

The framework-1 stretch occupies residues 1-22 (IVMTQTPSSKSVPVGDTVTINC). Positions 23–35 (QAAQSVYSNNRLS) are complementarity-determining-1. The segment at 36–50 (WFQQKPGQPPKGLIY) is framework-2. The tract at residues 51–57 (YASTLAS) is complementarity-determining-2. Residues 58 to 93 (GVQQDPSRFKGSGSGTQFTLTISDVQCBBAATVYYC) are framework-3. The segment at 94 to 103 (QGYKSSDTRA) is complementarity-determining-3. Residues 104–113 (FGGGTEVVVK) form a framework-4 region.

This chain is Ig kappa chain V region AH80-5, found in Oryctolagus cuniculus (Rabbit).